The following is a 452-amino-acid chain: Ketoisovalerate reductase BEA2 (452 aa).

70–75 contributes to the NADP(+) binding site; that stretch reads GPGNIG. Residue Lys285 is the Proton donor of the active site. Asn289, Asn293, and Ser393 together coordinate substrate. Glu405 is an NADP(+) binding site.

This sequence belongs to the ketopantoate reductase family.

It carries out the reaction (R)-2-hydroxy-3-methylbutanoate + NADP(+) = 3-methyl-2-oxobutanoate + NADPH + H(+). In terms of biological role, ketoisovalerate reductase; part of the gene cluster that mediates the biosynthesis of beauvericin (BEA), a non-ribosomal cyclic hexadepsipeptide that shows antibiotic, antifungal, insecticidal, and cancer cell antiproliferative and antihaptotactic activity. Ketoisovalerate reductase BEA2 catalyzes the NADPH-specific reduction of ketoisovaleric acid to hydroxyisovalerate, a precursor for beauvericin biosynthesis. The nonribosomal cyclodepsipeptide synthetase BEA1 then catalyzes the formation of beauvericin via condensation and cyclization of 3 dipeptidol monomers, each composed of one unit of hydroxyisovalerate and one unit of N-methyl-phenylalanine. This is Ketoisovalerate reductase BEA2 from Gibberella fujikuroi (strain CBS 195.34 / IMI 58289 / NRRL A-6831) (Bakanae and foot rot disease fungus).